Reading from the N-terminus, the 97-residue chain is Co-chaperonin GroES (97 aa).

It belongs to the GroES chaperonin family. Heptamer of 7 subunits arranged in a ring. Interacts with the chaperonin GroEL.

It localises to the cytoplasm. Together with the chaperonin GroEL, plays an essential role in assisting protein folding. The GroEL-GroES system forms a nano-cage that allows encapsulation of the non-native substrate proteins and provides a physical environment optimized to promote and accelerate protein folding. GroES binds to the apical surface of the GroEL ring, thereby capping the opening of the GroEL channel. This is Co-chaperonin GroES from Arthrobacter sp. (strain FB24).